Reading from the N-terminus, the 215-residue chain is Cytochrome c biogenesis ATP-binding export protein CcmA (215 aa).

Positions 8–215 constitute an ABC transporter domain; sequence LQATALACER…RDLDLGQWSA (208 aa). 40 to 47 lines the ATP pocket; that stretch reads GPNGCGKT.

This sequence belongs to the ABC transporter superfamily. CcmA exporter (TC 3.A.1.107) family. In terms of assembly, the complex is composed of two ATP-binding proteins (CcmA) and two transmembrane proteins (CcmB).

The protein localises to the cell inner membrane. It carries out the reaction heme b(in) + ATP + H2O = heme b(out) + ADP + phosphate + H(+). Part of the ABC transporter complex CcmAB involved in the biogenesis of c-type cytochromes; once thought to export heme, this seems not to be the case, but its exact role is uncertain. Responsible for energy coupling to the transport system. The chain is Cytochrome c biogenesis ATP-binding export protein CcmA from Pseudomonas syringae pv. syringae (strain B728a).